The chain runs to 319 residues: Acetyl-coenzyme A carboxylase carboxyl transferase subunit beta (319 aa).

A CoA carboxyltransferase N-terminal domain is found at 24–293 (LWIKCPDTGQ…MIEQEPEPSA (270 aa)). The disordered stretch occupies residues 282-319 (PEMIEQEPEPSAPVPPDEPDEPAATQEAPPAAPAAPPA).

This sequence belongs to the AccD/PCCB family. In terms of assembly, acetyl-CoA carboxylase is a heterohexamer composed of biotin carboxyl carrier protein (AccB), biotin carboxylase (AccC) and two subunits each of ACCase subunit alpha (AccA) and ACCase subunit beta (AccD).

Its subcellular location is the cytoplasm. It catalyses the reaction N(6)-carboxybiotinyl-L-lysyl-[protein] + acetyl-CoA = N(6)-biotinyl-L-lysyl-[protein] + malonyl-CoA. The protein operates within lipid metabolism; malonyl-CoA biosynthesis; malonyl-CoA from acetyl-CoA: step 1/1. Its function is as follows. Component of the acetyl coenzyme A carboxylase (ACC) complex. Biotin carboxylase (BC) catalyzes the carboxylation of biotin on its carrier protein (BCCP) and then the CO(2) group is transferred by the transcarboxylase to acetyl-CoA to form malonyl-CoA. The polypeptide is Acetyl-coenzyme A carboxylase carboxyl transferase subunit beta (Nitrobacter winogradskyi (strain ATCC 25391 / DSM 10237 / CIP 104748 / NCIMB 11846 / Nb-255)).